The chain runs to 417 residues: MNIIDELTWRGAVNQQTDEEGLKKLTDEKKIGLYAGIDPTGDSMHIGHLIPFMVLKRFQQAGHKPVILIGGGTGSIGDPSGKKSERVLQTMEQVHHNEEALKSQMVKFFGTDNFRMVNNYDWLSKMSLLDFLRDYGKLFNVNTMLAKDIVASRLEVGISFTEFTYQILQSIDFLHLYKNEDVQLQIGGGDQWGNITAGTDLIHRMEGQEAKVYGLTIPLLLKADGTKFGKSEGGNVWLDAEKTTPYEFYQFWLNQDDRDVVKFLKYFTFLSHEEIERLAETVKTAPEKREAQRRLAEEVTSFVHGDAAVEEAQHISAALFSGEVKDLTASEIEQGFKNMPSVDVENKKENIVLWLVDTTKIESSRRQAREDIQNGAIRINGEKVTDVNAEIDPASNFDGKFVIVRRGKKKYFLARVK.

Y34 serves as a coordination point for L-tyrosine. The 'HIGH' region signature appears at 39–48; it reads PTGDSMHIGH. L-tyrosine-binding residues include Y165 and Q169. The short motif at 227–231 is the 'KMSKS' region element; sequence KFGKS. K230 serves as a coordination point for ATP. Positions 349-417 constitute an S4 RNA-binding domain; sequence ENIVLWLVDT…KKKYFLARVK (69 aa).

Belongs to the class-I aminoacyl-tRNA synthetase family. TyrS type 1 subfamily. In terms of assembly, homodimer.

Its subcellular location is the cytoplasm. The enzyme catalyses tRNA(Tyr) + L-tyrosine + ATP = L-tyrosyl-tRNA(Tyr) + AMP + diphosphate + H(+). Functionally, catalyzes the attachment of tyrosine to tRNA(Tyr) in a two-step reaction: tyrosine is first activated by ATP to form Tyr-AMP and then transferred to the acceptor end of tRNA(Tyr). In Pediococcus pentosaceus (strain ATCC 25745 / CCUG 21536 / LMG 10740 / 183-1w), this protein is Tyrosine--tRNA ligase.